The sequence spans 125 residues: Small ribosomal subunit protein uS12 (125 aa).

Position 89 is a 3-methylthioaspartic acid (D89). The segment at 106-125 is disordered; sequence GVKDRKQSRSKYGAKRPKKA. A compositionally biased stretch (basic residues) spans 113–125; sequence SRSKYGAKRPKKA.

Belongs to the universal ribosomal protein uS12 family. Part of the 30S ribosomal subunit. Contacts proteins S8 and S17. May interact with IF1 in the 30S initiation complex.

Functionally, with S4 and S5 plays an important role in translational accuracy. Its function is as follows. Interacts with and stabilizes bases of the 16S rRNA that are involved in tRNA selection in the A site and with the mRNA backbone. Located at the interface of the 30S and 50S subunits, it traverses the body of the 30S subunit contacting proteins on the other side and probably holding the rRNA structure together. The combined cluster of proteins S8, S12 and S17 appears to hold together the shoulder and platform of the 30S subunit. The sequence is that of Small ribosomal subunit protein uS12 from Azoarcus sp. (strain BH72).